The primary structure comprises 85 residues: Large ribosomal subunit protein bL27 (85 aa).

The protein belongs to the bacterial ribosomal protein bL27 family.

The protein is Large ribosomal subunit protein bL27 of Campylobacter fetus subsp. fetus (strain 82-40).